The chain runs to 275 residues: Tryptophan synthase alpha chain (275 aa).

Residue Glu-51 is the Proton acceptor of the active site.

This sequence belongs to the TrpA family. As to quaternary structure, tetramer of two alpha and two beta chains.

The enzyme catalyses (1S,2R)-1-C-(indol-3-yl)glycerol 3-phosphate + L-serine = D-glyceraldehyde 3-phosphate + L-tryptophan + H2O. It participates in amino-acid biosynthesis; L-tryptophan biosynthesis; L-tryptophan from chorismate: step 5/5. Functionally, the alpha subunit is responsible for the aldol cleavage of indoleglycerol phosphate to indole and glyceraldehyde 3-phosphate. This is Tryptophan synthase alpha chain from Caulobacter vibrioides (strain ATCC 19089 / CIP 103742 / CB 15) (Caulobacter crescentus).